Reading from the N-terminus, the 360-residue chain is Lipid-A-disaccharide synthase (360 aa).

It belongs to the LpxB family.

The catalysed reaction is a lipid X + a UDP-2-N,3-O-bis[(3R)-3-hydroxyacyl]-alpha-D-glucosamine = a lipid A disaccharide + UDP + H(+). The protein operates within bacterial outer membrane biogenesis; LPS lipid A biosynthesis. Condensation of UDP-2,3-diacylglucosamine and 2,3-diacylglucosamine-1-phosphate to form lipid A disaccharide, a precursor of lipid A, a phosphorylated glycolipid that anchors the lipopolysaccharide to the outer membrane of the cell. In Helicobacter pylori (strain HPAG1), this protein is Lipid-A-disaccharide synthase.